Consider the following 353-residue polypeptide: MTQFKQLSFWSDAEPLECVTRTPEAPNVVTFSFQSPSGALFNHDPGQFVTLELPAPGGPLYRTYTISSAPSRPTALTITVKAQDGSTGTRWMLDNLHKGMRIRAIGPAGKFSIVHHPADKYLFISAGSGITPMVAMTTWLYDSGREPDVVFINCARRPSEIILRDRMELMASRIVGIDLKWVVEEPDPFRSWTGYRGMFNQIMLGLMAQDYLEREVFCCGPEPFMRAVREALAGLGYDMSRYHQESFTAEPGHAEDVPEDVIPDEQNHAEIAFALSGVTTRCSETDTILAAAKAAGLVIPSGCSMGICGTCKVRKTEGQVHMVHNGGITDEDVEDGYILACCSKPLRRVSVEA.

The region spanning Ser11–Val114 is the FAD-binding FR-type domain. In terms of domain architecture, 2Fe-2S ferredoxin-type spans Ala269–Ala353. Cys303, Cys308, Cys311, and Cys341 together coordinate [2Fe-2S] cluster.

It in the N-terminal section; belongs to the FAD-binding oxidoreductase type 6 family. In terms of assembly, the system is probably composed of an oxygenase subunit (Stc2) and two reductase subunits (Stc3 and Stc4). Requires FAD as cofactor. It depends on [2Fe-2S] cluster as a cofactor.

In terms of biological role, reductase involved in the catabolism of stachydrine (L-proline betaine), a source of carbon and nitrogen. Part of a Rieske-type oxygenase system that catalyzes the demethylation of stachydrine to produce N-methyl-L-proline (monomethylproline). This subunit is probably involved in the transfer of electrons from NAD(P)H to the catalytic subunit Stc2. This chain is Stachydrine N-demethylase reductase subunit Stc4, found in Rhizobium meliloti (strain 1021) (Ensifer meliloti).